The sequence spans 80 residues: Cell division protein ZapB (80 aa).

The stretch at 3 to 80 forms a coiled coil; the sequence is FEVLEKLEAK…SLLGKMEDVE (78 aa).

This sequence belongs to the ZapB family. In terms of assembly, homodimer. The ends of the coiled-coil dimer bind to each other, forming polymers. Interacts with FtsZ.

The protein resides in the cytoplasm. Non-essential, abundant cell division factor that is required for proper Z-ring formation. It is recruited early to the divisome by direct interaction with FtsZ, stimulating Z-ring assembly and thereby promoting cell division earlier in the cell cycle. Its recruitment to the Z-ring requires functional FtsA or ZipA. The chain is Cell division protein ZapB from Vibrio cholerae serotype O1 (strain ATCC 39541 / Classical Ogawa 395 / O395).